We begin with the raw amino-acid sequence, 194 residues long: 3-isopropylmalate dehydratase small subunit (194 aa).

It belongs to the LeuD family. LeuD type 1 subfamily. Heterodimer of LeuC and LeuD.

The catalysed reaction is (2R,3S)-3-isopropylmalate = (2S)-2-isopropylmalate. It functions in the pathway amino-acid biosynthesis; L-leucine biosynthesis; L-leucine from 3-methyl-2-oxobutanoate: step 2/4. Catalyzes the isomerization between 2-isopropylmalate and 3-isopropylmalate, via the formation of 2-isopropylmaleate. This is 3-isopropylmalate dehydratase small subunit from Leuconostoc mesenteroides subsp. mesenteroides (strain ATCC 8293 / DSM 20343 / BCRC 11652 / CCM 1803 / JCM 6124 / NCDO 523 / NBRC 100496 / NCIMB 8023 / NCTC 12954 / NRRL B-1118 / 37Y).